Here is a 146-residue protein sequence, read N- to C-terminus: Ribonuclease H (146 aa).

An RNase H type-1 domain is found at 1 to 138 (MYAWTDGACR…ADALANRGID (138 aa)). Residues Asp6, Glu44, Asp66, and Asp130 each contribute to the Mg(2+) site.

The protein belongs to the RNase H family. In terms of assembly, monomer. It depends on Mg(2+) as a cofactor.

It localises to the cytoplasm. It catalyses the reaction Endonucleolytic cleavage to 5'-phosphomonoester.. In terms of biological role, endonuclease that specifically degrades the RNA of RNA-DNA hybrids. In Alkalilimnicola ehrlichii (strain ATCC BAA-1101 / DSM 17681 / MLHE-1), this protein is Ribonuclease H.